Reading from the N-terminus, the 103-residue chain is Large ribosomal subunit protein bL21 (103 aa).

It belongs to the bacterial ribosomal protein bL21 family. As to quaternary structure, part of the 50S ribosomal subunit. Contacts protein L20.

This protein binds to 23S rRNA in the presence of protein L20. This chain is Large ribosomal subunit protein bL21, found in Actinobacillus succinogenes (strain ATCC 55618 / DSM 22257 / CCUG 43843 / 130Z).